The sequence spans 237 residues: Mediator of RNA polymerase II transcription subunit 20 (237 aa).

Belongs to the Mediator complex subunit 20 family. As to quaternary structure, component of the Mediator complex.

The protein resides in the nucleus. In terms of biological role, component of the Mediator complex, a coactivator involved in the regulated transcription of nearly all RNA polymerase II-dependent genes. Mediator functions as a bridge to convey information from gene-specific regulatory proteins to the basal RNA polymerase II transcription machinery. Mediator is recruited to promoters by direct interactions with regulatory proteins and serves as a scaffold for the assembly of a functional preinitiation complex with RNA polymerase II and the general transcription factors. This Scheffersomyces stipitis (strain ATCC 58785 / CBS 6054 / NBRC 10063 / NRRL Y-11545) (Yeast) protein is Mediator of RNA polymerase II transcription subunit 20 (SRB2).